The primary structure comprises 230 residues: Agamous-like MADS-box protein AGL11 (230 aa).

Residues 3–57 (RGKIEIKRIENSTNRQVTFCKRRNGLLKKAYELSVLCDAEVALIVFSTRGRLYEY) form the MADS-box domain. The K-box domain maps to 87 to 177 (AAYYQQESAK…RTKVAEVERY (91 aa)). Residues 211 to 230 (SGSGNGGSYSDPDKKILHLG) are disordered. The segment covering 221-230 (DPDKKILHLG) has biased composition (basic and acidic residues).

In terms of assembly, interacts with AGL15 and AGL16.

It localises to the nucleus. Probable transcription factor. Is required, together with TT16/AGL32 for the maternal control of endothelium formation, which is essential for female gametophyte development and fertilization, and seed formation. The chain is Agamous-like MADS-box protein AGL11 (AGL11) from Arabidopsis thaliana (Mouse-ear cress).